Here is a 361-residue protein sequence, read N- to C-terminus: MIPKEEIMGIFEKYNKDEITIATVGSHTSLHILKGAKLEGFSTAVITTKDRDVPYKRFGVADKFIYVDKFSDISSEEIQEQLREMNAIVVPHGSFIAYCGLDNVESTFKVPMFGNRAILRWEAERDLEGQLLGGSGLRLPKKYNSPDEIDGPVMVKFPGARGGRGYFPCSSTEEFWRKINDFKAKGVLSEEDVKKAHIEEYVVGANYCIHYFYSPLKDRVELMGIDRRYESSIDGLVRVPSKDQLELDIDPSYVITGNFPVVIRESLLPQVFDMGDKLCKKAEELVKPGMLGPFCLQSLCTENLELVVFEMSARSDGGNNTFMNGSPYSYLYNAEPLSMGQRIAKEIKLALELKMIEKVIS.

Positions 27 and 94 each coordinate 5-amino-1-(5-phospho-beta-D-ribosyl)imidazole-4-carboxamide. One can recognise an ATP-grasp domain in the interval 116 to 348; the sequence is RAILRWEAER…MGQRIAKEIK (233 aa). Residues 146-208 and E230 contribute to the ATP site; that span reads PDEI…ANYC. Position 258 (N258) interacts with 5-amino-1-(5-phospho-beta-D-ribosyl)imidazole-4-carboxamide. Positions 297 and 310 each coordinate Mg(2+).

This sequence belongs to the phosphohexose mutase family. Mg(2+) is required as a cofactor. Requires Mn(2+) as cofactor.

The enzyme catalyses 5-amino-1-(5-phospho-beta-D-ribosyl)imidazole-4-carboxamide + formate + ATP = 5-formamido-1-(5-phospho-D-ribosyl)imidazole-4-carboxamide + ADP + phosphate. It functions in the pathway purine metabolism; IMP biosynthesis via de novo pathway; 5-formamido-1-(5-phospho-D-ribosyl)imidazole-4-carboxamide from 5-amino-1-(5-phospho-D-ribosyl)imidazole-4-carboxamide (formate route): step 1/1. Catalyzes the ATP- and formate-dependent formylation of 5-aminoimidazole-4-carboxamide-1-beta-d-ribofuranosyl 5'-monophosphate (AICAR) to 5-formaminoimidazole-4-carboxamide-1-beta-d-ribofuranosyl 5'-monophosphate (FAICAR) in the absence of folates. This chain is 5-formaminoimidazole-4-carboxamide-1-(beta)-D-ribofuranosyl 5'-monophosphate synthetase, found in Methanococcus vannielii (strain ATCC 35089 / DSM 1224 / JCM 13029 / OCM 148 / SB).